A 331-amino-acid polypeptide reads, in one-letter code: Isopentenyl-diphosphate delta-isomerase (331 aa).

4-5 (RK) is a binding site for substrate. Residues 59–61 (AMT), S89, and N116 contribute to the FMN site. Q146 contributes to the substrate binding site. A Mg(2+)-binding site is contributed by E147. FMN is bound by residues K178, S203, T208, 252–254 (GIR), and 273–274 (SR).

This sequence belongs to the IPP isomerase type 2 family. As to quaternary structure, homooctamer. Dimer of tetramers. FMN is required as a cofactor. It depends on NADPH as a cofactor. Mg(2+) serves as cofactor.

The protein resides in the cytoplasm. It carries out the reaction isopentenyl diphosphate = dimethylallyl diphosphate. Functionally, involved in the biosynthesis of isoprenoids. Catalyzes the 1,3-allylic rearrangement of the homoallylic substrate isopentenyl (IPP) to its allylic isomer, dimethylallyl diphosphate (DMAPP). The sequence is that of Isopentenyl-diphosphate delta-isomerase from Streptococcus mutans serotype c (strain ATCC 700610 / UA159).